The following is a 361-amino-acid chain: Hydroxycarboxylate dehydrogenase B (361 aa).

Residues H48, 122–124 (GRI), 178–182 (LLDYA), H234, N270, and 313–316 (GEWE) contribute to the NAD(+) site.

It belongs to the LDH2/MDH2 oxidoreductase family.

The catalysed reaction is 2-hydroxyglutarate + NADP(+) = 2-oxoglutarate + NADPH + H(+). It carries out the reaction 2-hydroxyglutarate + NAD(+) = 2-oxoglutarate + NADH + H(+). The enzyme catalyses 3-phenyllactate + NADP(+) = 3-phenylpyruvate + NADPH + H(+). It catalyses the reaction 3-phenyllactate + NAD(+) = 3-phenylpyruvate + NADH + H(+). The catalysed reaction is (2R)-2-hydroxy-3-(4-hydroxyphenyl)propanoate + NAD(+) = 3-(4-hydroxyphenyl)pyruvate + NADH + H(+). It carries out the reaction (2R)-2-hydroxy-3-(4-hydroxyphenyl)propanoate + NADP(+) = 3-(4-hydroxyphenyl)pyruvate + NADPH + H(+). The enzyme catalyses (2R)-3-(3,4-dihydroxyphenyl)lactate + NADP(+) = 3-(3,4-dihydroxyphenyl)pyruvate + NADPH + H(+). It catalyses the reaction (2R)-3-(3,4-dihydroxyphenyl)lactate + NAD(+) = 3-(3,4-dihydroxyphenyl)pyruvate + NADH + H(+). Functionally, catalyzes the NAD(P)H-dependent reduction of 2-oxoglutarate, phenylpyruvate and (4-hydroxyphenyl)pyruvate, leading to the respective 2-hydroxycarboxylate in vitro. Shows a preference for NADPH over NADH as a redox partner. Do not catalyze the reverse reactions. This is Hydroxycarboxylate dehydrogenase B from Escherichia coli (strain K12).